The sequence spans 163 residues: uncharacterized protein (163 aa).

This is an uncharacterized protein from Orgyia pseudotsugata (Douglas-fir tussock moth).